The following is a 254-amino-acid chain: Trans-aconitate 2-methyltransferase (254 aa).

Belongs to the methyltransferase superfamily. Tam family.

It localises to the cytoplasm. The enzyme catalyses trans-aconitate + S-adenosyl-L-methionine = (E)-3-(methoxycarbonyl)pent-2-enedioate + S-adenosyl-L-homocysteine. Functionally, catalyzes the S-adenosylmethionine monomethyl esterification of trans-aconitate. This Rhodococcus jostii (strain RHA1) protein is Trans-aconitate 2-methyltransferase.